A 213-amino-acid polypeptide reads, in one-letter code: Kynurenine formamidase (213 aa).

Residue Trp-18 participates in substrate binding. 3 residues coordinate Zn(2+): His-48, His-52, and Asp-54. His-58 serves as the catalytic Proton donor/acceptor. Zn(2+) contacts are provided by His-160 and Glu-172.

Belongs to the Cyclase 1 superfamily. KynB family. As to quaternary structure, homodimer. Zn(2+) is required as a cofactor.

The enzyme catalyses N-formyl-L-kynurenine + H2O = L-kynurenine + formate + H(+). Its pathway is amino-acid degradation; L-tryptophan degradation via kynurenine pathway; L-kynurenine from L-tryptophan: step 2/2. In terms of biological role, catalyzes the hydrolysis of N-formyl-L-kynurenine to L-kynurenine, the second step in the kynurenine pathway of tryptophan degradation. This Burkholderia cenocepacia (strain HI2424) protein is Kynurenine formamidase.